The primary structure comprises 160 residues: Small ribosomal subunit protein uS7 (160 aa).

It belongs to the universal ribosomal protein uS7 family. Part of the 30S ribosomal subunit. Contacts proteins S9 and S11.

One of the primary rRNA binding proteins, it binds directly to 16S rRNA where it nucleates assembly of the head domain of the 30S subunit. Is located at the subunit interface close to the decoding center, probably blocks exit of the E-site tRNA. In Anaplasma marginale (strain Florida), this protein is Small ribosomal subunit protein uS7.